Here is a 501-residue protein sequence, read N- to C-terminus: L-arabinose isomerase (501 aa).

4 residues coordinate Mn(2+): Glu306, Glu333, His350, and His450.

Belongs to the arabinose isomerase family. As to quaternary structure, homohexamer. Requires Mn(2+) as cofactor.

The catalysed reaction is beta-L-arabinopyranose = L-ribulose. The protein operates within carbohydrate degradation; L-arabinose degradation via L-ribulose; D-xylulose 5-phosphate from L-arabinose (bacterial route): step 1/3. In terms of biological role, catalyzes the conversion of L-arabinose to L-ribulose. This Erwinia tasmaniensis (strain DSM 17950 / CFBP 7177 / CIP 109463 / NCPPB 4357 / Et1/99) protein is L-arabinose isomerase.